The following is a 257-amino-acid chain: Acetylglutamate kinase (257 aa).

Residues 43 to 44, R65, and N157 each bind substrate; that span reads GG. Residues 180–185 and 208–210 each bind ATP; these read DVSGIL and IIT.

It belongs to the acetylglutamate kinase family. ArgB subfamily. As to quaternary structure, homodimer.

It localises to the cytoplasm. It catalyses the reaction N-acetyl-L-glutamate + ATP = N-acetyl-L-glutamyl 5-phosphate + ADP. It participates in amino-acid biosynthesis; L-arginine biosynthesis; N(2)-acetyl-L-ornithine from L-glutamate: step 2/4. In terms of biological role, catalyzes the ATP-dependent phosphorylation of N-acetyl-L-glutamate. This is Acetylglutamate kinase from Salmonella agona (strain SL483).